The chain runs to 120 residues: Large ribosomal subunit protein uL22 (120 aa).

The tract at residues 1–25 (MFVNKKYTAKGKNLPSSPKKVRPIA) is disordered.

This sequence belongs to the universal ribosomal protein uL22 family. Part of the 50S ribosomal subunit.

This protein binds specifically to 23S rRNA; its binding is stimulated by other ribosomal proteins, e.g. L4, L17, and L20. It is important during the early stages of 50S assembly. It makes multiple contacts with different domains of the 23S rRNA in the assembled 50S subunit and ribosome. In terms of biological role, the globular domain of the protein is located near the polypeptide exit tunnel on the outside of the subunit, while an extended beta-hairpin is found that lines the wall of the exit tunnel in the center of the 70S ribosome. This chain is Large ribosomal subunit protein uL22, found in Borrelia recurrentis (strain A1).